Consider the following 112-residue polypeptide: Large ribosomal subunit protein eL30z (112 aa).

Belongs to the eukaryotic ribosomal protein eL30 family.

The chain is Large ribosomal subunit protein eL30z (RPL30A) from Arabidopsis thaliana (Mouse-ear cress).